A 26-amino-acid polypeptide reads, in one-letter code: Turripeptide OL49 (26 aa).

Contains 3 disulfide bonds. As to expression, expressed by the venom duct.

It is found in the secreted. Its function is as follows. Acts as a neurotoxin by inhibiting an ion channel. This Iotyrris olangoensis (Sea snail) protein is Turripeptide OL49.